The primary structure comprises 394 residues: Phosphopentomutase (394 aa).

Residues D13, D286, H291, D327, H328, and H339 each coordinate Mn(2+).

The protein belongs to the phosphopentomutase family. Mn(2+) is required as a cofactor.

The protein localises to the cytoplasm. The catalysed reaction is 2-deoxy-alpha-D-ribose 1-phosphate = 2-deoxy-D-ribose 5-phosphate. The enzyme catalyses alpha-D-ribose 1-phosphate = D-ribose 5-phosphate. Its pathway is carbohydrate degradation; 2-deoxy-D-ribose 1-phosphate degradation; D-glyceraldehyde 3-phosphate and acetaldehyde from 2-deoxy-alpha-D-ribose 1-phosphate: step 1/2. In terms of biological role, isomerase that catalyzes the conversion of deoxy-ribose 1-phosphate (dRib-1-P) and ribose 1-phosphate (Rib-1-P) to deoxy-ribose 5-phosphate (dRib-5-P) and ribose 5-phosphate (Rib-5-P), respectively. This chain is Phosphopentomutase, found in Bacillus thuringiensis (strain Al Hakam).